Consider the following 352-residue polypeptide: Pyrimidine monooxygenase RutA (352 aa).

FMN-binding positions include 49–50, Asn115, Glu124, 140–141, and Ser189; these read IK and RY.

This sequence belongs to the NtaA/SnaA/DszA monooxygenase family. RutA subfamily.

It carries out the reaction uracil + FMNH2 + NADH + O2 = (Z)-3-ureidoacrylate + FMN + NAD(+) + H2O + H(+). The enzyme catalyses thymine + FMNH2 + NADH + O2 = (Z)-2-methylureidoacrylate + FMN + NAD(+) + H2O + H(+). Functionally, catalyzes the pyrimidine ring opening between N-3 and C-4 by an unusual flavin hydroperoxide-catalyzed mechanism, adding oxygen atoms in the process to yield ureidoacrylate peracid, that immediately reacts with FMN forming ureidoacrylate and FMN-N(5)-oxide. The FMN-N(5)-oxide reacts spontaneously with NADH to produce FMN. Requires the flavin reductase RutF to regenerate FMN in vivo. The polypeptide is Pyrimidine monooxygenase RutA (Caulobacter segnis (strain ATCC 21756 / DSM 7131 / JCM 7823 / NBRC 15250 / LMG 17158 / TK0059) (Mycoplana segnis)).